We begin with the raw amino-acid sequence, 189 residues long: Cytidylate kinase (189 aa).

7-15 is an ATP binding site; sequence GPPGSGKTS.

The protein belongs to the cytidylate kinase family. Type 2 subfamily.

The protein resides in the cytoplasm. It carries out the reaction CMP + ATP = CDP + ADP. The enzyme catalyses dCMP + ATP = dCDP + ADP. This chain is Cytidylate kinase, found in Saccharolobus islandicus (strain Y.N.15.51 / Yellowstone #2) (Sulfolobus islandicus).